Consider the following 227-residue polypeptide: E3 ubiquitin-protein ligase ZNRF1 (227 aa).

The interval 1–42 is disordered; the sequence is MGGKQSTAARSRGPFPGVSTDDSAVPPPGGAPHFGHYRTGGG. Gly2 is lipidated: N-myristoyl glycine. Residues 2 to 10 are required for endosomal and lysosomal localization and myristoylation; sequence GGKQSTAAR. Phosphoserine occurs at positions 50, 52, and 53. Residues 65 to 105 are disordered; it reads GGVPFSLYTPASRGTGDSERAPGGGGSTSDSTYAHGNGYQE. Position 103 is a phosphotyrosine (Tyr103). Phosphoserine is present on Ser123. The RING-type; atypical zinc-finger motif lies at 184–225; that stretch reads CVICLEELLQGDTIARLPCLCIYHKSCIDSWFEVNRSCPEHP.

As to quaternary structure, interacts with AKT1, GLUL and TUBB2A. Interacts with ZNRF2. Interacts (via its RING domain) with UBE2N. Interacts (when phosphorylated) with YWHAE. Post-translationally, N-myristoylation targets ZNRF1 to intracellular membranes. Phosphorylated by SRC at Tyr-103; leading to 'Lys-63'-linked ubiquitination of TLR3, lysosomal trafficking and degradation.

Its subcellular location is the endosome. The protein localises to the lysosome. It localises to the membrane. It is found in the cytoplasmic vesicle. The protein resides in the secretory vesicle. Its subcellular location is the synaptic vesicle membrane. The enzyme catalyses S-ubiquitinyl-[E2 ubiquitin-conjugating enzyme]-L-cysteine + [acceptor protein]-L-lysine = [E2 ubiquitin-conjugating enzyme]-L-cysteine + N(6)-ubiquitinyl-[acceptor protein]-L-lysine.. It participates in protein modification; protein ubiquitination. Functionally, E3 ubiquitin-protein ligase that plays a role in different processes including cell differentiation, receptor recycling or regulation of inflammation. Mediates the ubiquitination of AKT1 and GLUL, thereby playing a role in neuron cells differentiation. Plays a role in the establishment and maintenance of neuronal transmission and plasticity. Regulates Schwann cells differentiation by mediating ubiquitination of GLUL. Promotes neurodegeneration by mediating 'Lys-48'-linked polyubiquitination and subsequent degradation of AKT1 in axons: degradation of AKT1 prevents AKT1-mediated phosphorylation of GSK3B, leading to GSK3B activation and phosphorylation of DPYSL2/CRMP2 followed by destabilization of microtubule assembly in axons. Ubiquitinates the Na(+)/K(+) ATPase alpha-1 subunit/ATP1A1 and thereby influences its endocytosis and/or degradation. Controls ligand-induced EGFR signaling via mediating receptor ubiquitination and recruitment of the ESCRT machinery. Acts as a negative feedback mechanism controlling TLR3 trafficking by mediating TLR3 'Lys-63'-linked polyubiquitination to reduce type I IFN production. Modulates inflammation by promoting caveolin-1/CAV1 ubiquitination and degradation to regulate TLR4-activated immune response. This chain is E3 ubiquitin-protein ligase ZNRF1 (Znrf1), found in Mus musculus (Mouse).